The following is a 100-amino-acid chain: UPF0213 protein YhbQ (100 aa).

A GIY-YIG domain is found at threonine 2–arginine 77.

Belongs to the UPF0213 family.

This is UPF0213 protein YhbQ from Escherichia coli O81 (strain ED1a).